A 192-amino-acid polypeptide reads, in one-letter code: Signal peptidase complex catalytic subunit SEC11C (192 aa).

Residues 2–28 (VRAGAVGTHLPASGLDIFGDLRKMNKR) are Cytoplasmic-facing. Residues 29-48 (QLYYQVLNFAMIVSSALMIW) form a helical; Signal-anchor for type II membrane protein membrane-spanning segment. Residues 49–192 (KGLIVLTGSE…GAYVLLKRES (144 aa)) lie on the Lumenal side of the membrane. Residues Ser-68, His-108, and Asp-134 each act as charge relay system in the active site. The C-terminal short (CTS) helix stretch occupies residues 177–188 (ALLAVMGAYVLL).

It belongs to the peptidase S26B family. As to quaternary structure, component of the signal peptidase complex paralog C (SPC-C) composed of a catalytic subunit SEC11C and three accessory subunits SPCS1, SPCS2 and SPCS3. Within the complex, interacts with SPCS2 and SPCS3. The complex induces a local thinning of the ER membrane which is used to measure the length of the signal peptide (SP) h-region of protein substrates. This ensures the selectivity of the complex towards h-regions shorter than 18-20 amino acids. May undergo processing at the N-terminus.

It is found in the endoplasmic reticulum membrane. It carries out the reaction Cleavage of hydrophobic, N-terminal signal or leader sequences from secreted and periplasmic proteins.. Functionally, catalytic component of the signal peptidase complex (SPC) which catalyzes the cleavage of N-terminal signal sequences from nascent proteins as they are translocated into the lumen of the endoplasmic reticulum. Specifically cleaves N-terminal signal peptides that contain a hydrophobic alpha-helix (h-region) shorter than 18-20 amino acids. In Canis lupus familiaris (Dog), this protein is Signal peptidase complex catalytic subunit SEC11C (SEC11C).